A 412-amino-acid chain; its full sequence is WW domain-containing oxidoreductase (412 aa).

Residues Met-1–Glu-24 form a disordered region. The region spanning Asp-16–Thr-49 is the WW 1 domain. A Nuclear localization signal motif is present at residues Gly-50–Cys-55. The 34-residue stretch at Gly-57–Gln-90 folds into the WW 2 domain. Position 128 to 134 (Gly-128 to Gly-134) interacts with NADP(+). Ser-257 is a substrate binding site. Tyr-290 acts as the Proton acceptor in catalysis.

It belongs to the short-chain dehydrogenases/reductases (SDR) family.

Its subcellular location is the cytoplasm. The protein localises to the mitochondrion. It is found in the golgi apparatus. The protein resides in the lysosome. Its function is as follows. Putative oxidoreductase. Acts as a tumor suppressor and plays a role in apoptosis. May function synergistically with p53/TP53 to control genotoxic stress-induced cell death. Plays a role in TGFB1 signaling and TGFB1-mediated cell death. May also play a role in tumor necrosis factor (TNF)-mediated cell death. Required for normal bone development. Inhibits Wnt signaling. This chain is WW domain-containing oxidoreductase (wwox), found in Danio rerio (Zebrafish).